A 96-amino-acid chain; its full sequence is Co-chaperonin GroES (96 aa).

It belongs to the GroES chaperonin family. In terms of assembly, heptamer of 7 subunits arranged in a ring. Interacts with the chaperonin GroEL.

The protein resides in the cytoplasm. In terms of biological role, together with the chaperonin GroEL, plays an essential role in assisting protein folding. The GroEL-GroES system forms a nano-cage that allows encapsulation of the non-native substrate proteins and provides a physical environment optimized to promote and accelerate protein folding. GroES binds to the apical surface of the GroEL ring, thereby capping the opening of the GroEL channel. The chain is Co-chaperonin GroES from Aggregatibacter actinomycetemcomitans (Actinobacillus actinomycetemcomitans).